We begin with the raw amino-acid sequence, 987 residues long: VPS35 endosomal protein sorting factor-like (987 aa).

Residues 1–23 (MAERQSASSPTPSSPPQQQQQTP) show a composition bias toward low complexity. Positions 1–115 (MAERQSASSP…DPLNNPLEKK (115 aa)) are disordered. A compositionally biased stretch (basic and acidic residues) spans 43-63 (NGREVERHPLNSITKTEDTGK). A compositionally biased stretch (low complexity) spans 66–111 (QSSLSSNASSLQSAAAAASSSTATTDIDPLNNNNNNNTDIDPLNNP).

This sequence belongs to the VPS35L family. In terms of assembly, component of the heterotrimeric retriever complex.

The protein localises to the endosome. Functionally, acts as a component of the retriever complex. The retriever complex is a heterotrimeric complex related to retromer cargo-selective complex (CSC) and essential for retromer-independent retrieval and recycling of numerous cargos. The sequence is that of VPS35 endosomal protein sorting factor-like from Dictyostelium discoideum (Social amoeba).